A 450-amino-acid polypeptide reads, in one-letter code: Glucose-6-phosphate isomerase (450 aa).

The Proton donor role is filled by Glu-290. Residues His-311 and Lys-425 contribute to the active site.

This sequence belongs to the GPI family.

The protein localises to the cytoplasm. The enzyme catalyses alpha-D-glucose 6-phosphate = beta-D-fructose 6-phosphate. The protein operates within carbohydrate biosynthesis; gluconeogenesis. It participates in carbohydrate degradation; glycolysis; D-glyceraldehyde 3-phosphate and glycerone phosphate from D-glucose: step 2/4. Its function is as follows. Catalyzes the reversible isomerization of glucose-6-phosphate to fructose-6-phosphate. This Lactiplantibacillus plantarum (strain ATCC BAA-793 / NCIMB 8826 / WCFS1) (Lactobacillus plantarum) protein is Glucose-6-phosphate isomerase.